The sequence spans 652 residues: Potassium voltage-gated channel subfamily KQT member 1 (652 aa).

The Cytoplasmic portion of the chain corresponds to 1 to 110 (MSSEQPAWTF…YNFLERPTGW (110 aa)). A helical transmembrane segment spans residues 111-132 (KCFVYHFTVFLIVLICLIFSVL). Residues 133–143 (STIQQYNNLAT) lie on the Extracellular side of the membrane. The chain crosses the membrane as a helical span at residues 144 to 166 (ETLFWMEIVLVVFFGAEYVVRLW). The Cytoplasmic portion of the chain corresponds to 167–182 (SAGCRSKYVGVWGRLR). A helical membrane pass occupies residues 183 to 208 (FARKPISVIDLIVVVASVIVLCVGSN). Residues 209–216 (GQVFATSA) lie on the Extracellular side of the membrane. A helical; Voltage-sensor transmembrane segment spans residues 217 to 232 (IRGIRFLQILRMLHVD). An interaction with KCNE3 region spans residues 228-236 (MLHVDRQGG). Over 233-250 (RQGGTWRLLGSVVFIHRQ) the chain is Cytoplasmic. Residue Q234 coordinates a 1,2-diacyl-sn-glycero-3-phospho-(1D-myo-inositol-4,5-bisphosphate). The chain crosses the membrane as a helical span at residues 251-273 (ELITTLYIGFLGLIFSSYFVYLA). Topologically, residues 274-289 (EKDAIDSSGEYQFGSY) are extracellular. Residues 290-310 (ADALWWGVVTVTTIGYGDKVP) constitute an intramembrane region (pore-forming). Topologically, residues 311 to 312 (QT) are extracellular. Residues 313–338 (WIGKTIASCFSVFAISFFALPAGILG) traverse the membrane as a helical segment. Over 339–652 (SGFALKVQQK…VPRMTQDNIS (314 aa)) the chain is Cytoplasmic. Positions 360 to 372 (AAASLIQTAWRCY) are interaction with CALM. The tract at residues 393–419 (HHLMSPSPKPKKSAMVKKKKIRTERDE) is disordered. The span at 401 to 414 (KPKKSAMVKKKKIR) shows a compositional bias: basic residues. An interaction with CALM; calcium-dependent region spans residues 504–518 (KVIRRMQYFVAKKKF). Residues 524-561 (PYDVRDVIEQYSQGHLNLMVRIKELQRRLDQSLGKPSL) are interaction with KCNE1 C-terminus. Residues 577-605 (IGSRLNRVEDKVTQMDHKLNLITDMLHHL) form an interaction with AKAP9 region. Residues 578-609 (GSRLNRVEDKVTQMDHKLNLITDMLHHLLTNQ) form a C-terminal assembly domain (tetramerization) region. The segment at 609–652 (QQGSQSIRTPHRSNSLNSENHPSRNTLPTYEQLNVPRMTQDNIS) is disordered.

It belongs to the potassium channel family. KQT (TC 1.A.1.15) subfamily. Kv7.1/KCNQ1 sub-subfamily. Tetramer. Heterotetramer with KCNE1; targets to the membrane raft. Interacts (via C-terminus) with CALM; forms a heterotetramer in a calcium-independent manner. Interacts with KCNE2; form a heterooligomer complex that targets to the membrane raft and leading to currents with an apparently instantaneous activation, a rapid deactivation process and a linear current-voltage relationship and decreases the amplitude of the outward current. Interacts with KCNE3; four KCNE3 molecules are bound to one KCNQ1 tetramer (4:4 KCNQ1:KCNE3 stoichiometry); alters membrane raft localization; affects KCNQ1 structure and gating properties. Interacts with KCNE4; impairs KCNQ1 localization in lipid rafts and inhibits voltage-gated potassium channel activity. Interacts with KCNE5; impairs KCNQ1 localization in lipid rafts and only conducts current upon strong and continued depolarization.

The protein localises to the cell membrane. The protein resides in the cytoplasmic vesicle membrane. It localises to the membrane raft. Its subcellular location is the endoplasmic reticulum. It is found in the basolateral cell membrane. The enzyme catalyses K(+)(in) = K(+)(out). With respect to regulation, PIP2 molecule is essential to activate KCNQ channels by inducing the coupling of the voltage-sensing domain (VSD) and the pore-forming domain (PD). Upon channel activation, PIP2 disrupts the VSD-calmodulin/CALM interactions, causing the release of CALM from the VSD which triggers the opening of the gate. Calcium potentiates KCNQ1 channel current through calcium-bound CALM. Calcium-bound CALM competes with PIP2 to stabilize the channel open state. In terms of biological role, pore-forming subunit of the voltage-gated potassium (Kv) channel involved in the regulation of cardiomyocyte excitability and important in normal development and functions of myocardium, inner ear, stomach and colon. Associates with KCNE beta subunits that modulates current kinetics. Induces a voltage-dependent by rapidly activating and slowly deactivating potassium-selective outward current. Also promotes a delayed voltage activated potassium current showing outward rectification characteristic. During beta-adrenergic receptor stimulation participates in cardiac repolarization by associating with KCNE1 to form the I(Ks) cardiac potassium current that increases the amplitude and slows down the activation kinetics of outward potassium current I(Ks). When associated with KCNE3, forms the potassium channel that is important for cyclic AMP-stimulated intestinal secretion of chloride ions. When associated with KCNE2, forms a heterooligomer complex leading to currents with an apparently instantaneous activation, a rapid deactivation process and a linear current-voltage relationship and decreases the amplitude of the outward current. When associated with KCNE4, inhibits voltage-gated potassium channel activity. When associated with KCNE5, this complex only conducts current upon strong and continued depolarization. The protein is Potassium voltage-gated channel subfamily KQT member 1 of Xenopus laevis (African clawed frog).